Reading from the N-terminus, the 38-residue chain is Photosystem II reaction center protein M (38 aa).

The chain crosses the membrane as a helical span at residues 5–25 (ILGLIATALFIVIPTSFLLIL).

It belongs to the PsbM family. PSII is composed of 1 copy each of membrane proteins PsbA, PsbB, PsbC, PsbD, PsbE, PsbF, PsbH, PsbI, PsbJ, PsbK, PsbL, PsbM, PsbT, PsbX, PsbY, PsbZ, Psb30/Ycf12, at least 3 peripheral proteins of the oxygen-evolving complex and a large number of cofactors. It forms dimeric complexes.

It is found in the plastid. It localises to the cyanelle thylakoid membrane. In terms of biological role, one of the components of the core complex of photosystem II (PSII). PSII is a light-driven water:plastoquinone oxidoreductase that uses light energy to abstract electrons from H(2)O, generating O(2) and a proton gradient subsequently used for ATP formation. It consists of a core antenna complex that captures photons, and an electron transfer chain that converts photonic excitation into a charge separation. This subunit is found at the monomer-monomer interface. This Cyanophora paradoxa protein is Photosystem II reaction center protein M.